Reading from the N-terminus, the 320-residue chain is Nucleoporin Nup37 (320 aa).

4 WD repeats span residues Lys67–Leu113, Gly118–Ile157, Gly160–Ser200, and Ser203–Asp242.

It is found in the nucleus. It localises to the nuclear pore complex. Functionally, as part of the nuclear pore complex (NPC), has a role in its assembly and function. (Microbial infection) Required for optimal replication of E.chaffeensis. This is Nucleoporin Nup37 from Drosophila melanogaster (Fruit fly).